The following is a 99-amino-acid chain: MIRKAFVMQVNPDAHEEYQRRHNPIWPELEAVLKSHGAHNYAIYLDKARNLLFATVEIESEERWNAVASTDVCQRWWKYMTDVMPANPDNSPVSSELQG.

Position 18 (Tyr-18) interacts with substrate. His-22 acts as the Proton donor in catalysis. Substrate-binding positions include Tyr-41 and 76-77 (WW).

This sequence belongs to the rhamnose mutarotase family. As to quaternary structure, homodimer.

Its subcellular location is the cytoplasm. It carries out the reaction alpha-L-rhamnose = beta-L-rhamnose. It functions in the pathway carbohydrate metabolism; L-rhamnose metabolism. In terms of biological role, involved in the anomeric conversion of L-rhamnose. This is L-rhamnose mutarotase from Shigella boydii serotype 18 (strain CDC 3083-94 / BS512).